Reading from the N-terminus, the 422-residue chain is UDP-N-acetylglucosamine 1-carboxyvinyltransferase (422 aa).

24–25 (KN) provides a ligand contact to phosphoenolpyruvate. Arg-93 is a binding site for UDP-N-acetyl-alpha-D-glucosamine. Residue Cys-117 is the Proton donor of the active site. The residue at position 117 (Cys-117) is a 2-(S-cysteinyl)pyruvic acid O-phosphothioketal. UDP-N-acetyl-alpha-D-glucosamine is bound by residues 122–126 (RPVDL), 162–165 (KVSV), Asp-307, and Ile-329.

Belongs to the EPSP synthase family. MurA subfamily.

Its subcellular location is the cytoplasm. The enzyme catalyses phosphoenolpyruvate + UDP-N-acetyl-alpha-D-glucosamine = UDP-N-acetyl-3-O-(1-carboxyvinyl)-alpha-D-glucosamine + phosphate. It functions in the pathway cell wall biogenesis; peptidoglycan biosynthesis. Its function is as follows. Cell wall formation. Adds enolpyruvyl to UDP-N-acetylglucosamine. This chain is UDP-N-acetylglucosamine 1-carboxyvinyltransferase, found in Vibrio atlanticus (strain LGP32) (Vibrio splendidus (strain Mel32)).